A 223-amino-acid chain; its full sequence is Coiled-coil domain-containing protein 70 (223 aa).

Residues asparagine 129–tryptophan 153 adopt a coiled-coil conformation. The tract at residues glutamate 199–alanine 223 is disordered. A compositionally biased stretch (polar residues) spans glutamine 203–alanine 223.

This is Coiled-coil domain-containing protein 70 from Mus musculus (Mouse).